The sequence spans 512 residues: Maturase K (512 aa).

It belongs to the intron maturase 2 family. MatK subfamily.

The protein localises to the plastid. Its subcellular location is the chloroplast. Usually encoded in the trnK tRNA gene intron. Probably assists in splicing its own and other chloroplast group II introns. The polypeptide is Maturase K (Daucus carota (Wild carrot)).